A 100-amino-acid polypeptide reads, in one-letter code: MAVEHNMQSSTIVDVLEKILDKGVVIAGDITVGIADVELLTIKIRLIVASVDKAKEIGMDWWENDPYLSSKGANNKALEEENKMLHERLKTLEEKIETKR.

Belongs to the gas vesicle GvpA family. As to quaternary structure, interacts with GvpA.

It is found in the gas vesicle. A minor component of the gas vesicle, might be involved in nucleating gas vesicle formation. This protein could be important for the shape determination of the gas vesicle. Gas vesicles (GV) are hollow, gas filled proteinaceous nanostructures. During planktonic growth they allow positioning of the organism at a favorable depth for light or nutrient acquisition. Functionally, when a minimal gvp locus (gvpA2-gvpR-gvpN-gvpF-gvpG-gvpL-gvpS-gvpK-gvpJ-gvpT-gvpU, called pNL29) is expressed in E.coli gas vesicles are made. The sequence is that of Gas vesicle protein J from Priestia megaterium (Bacillus megaterium).